A 248-amino-acid polypeptide reads, in one-letter code: Protein LIFEGUARD 3 (248 aa).

The next 7 helical transmembrane spans lie at 42-62 (VYSI…TVVT), 74-94 (GLGL…LCPL), 105-125 (YLLL…TCAF), 130-150 (VILE…LYTF), 165-185 (FLFG…LFPL), 188-208 (VSVM…IVYD), and 222-242 (IWAA…LLTV).

This sequence belongs to the BI1 family.

The protein localises to the membrane. This chain is Protein LIFEGUARD 3, found in Arabidopsis thaliana (Mouse-ear cress).